Consider the following 92-residue polypeptide: Putative membrane protein insertion efficiency factor (92 aa).

The protein belongs to the UPF0161 family.

It localises to the cell inner membrane. Could be involved in insertion of integral membrane proteins into the membrane. The chain is Putative membrane protein insertion efficiency factor from Synechococcus sp. (strain CC9605).